Reading from the N-terminus, the 103-residue chain is Large ribosomal subunit protein uL24 (103 aa).

Belongs to the universal ribosomal protein uL24 family. As to quaternary structure, part of the 50S ribosomal subunit.

Its function is as follows. One of two assembly initiator proteins, it binds directly to the 5'-end of the 23S rRNA, where it nucleates assembly of the 50S subunit. One of the proteins that surrounds the polypeptide exit tunnel on the outside of the subunit. The polypeptide is Large ribosomal subunit protein uL24 (Bacillus anthracis (strain A0248)).